Reading from the N-terminus, the 127-residue chain is UPF0102 protein Mmar10_3014 (127 aa).

It belongs to the UPF0102 family.

The polypeptide is UPF0102 protein Mmar10_3014 (Maricaulis maris (strain MCS10) (Caulobacter maris)).